The sequence spans 89 residues: UPF0147 protein Msed_2034 (89 aa).

This sequence belongs to the UPF0147 family.

This is UPF0147 protein Msed_2034 from Metallosphaera sedula (strain ATCC 51363 / DSM 5348 / JCM 9185 / NBRC 15509 / TH2).